A 401-amino-acid chain; its full sequence is Riboflavin biosynthesis protein RibBA (401 aa).

Positions 1 to 203 (MTDFQFSKVE…IQQLQEYRRK (203 aa)) are DHBP synthase. D-ribulose 5-phosphate-binding positions include 30 to 31 (RE), Asp-35, 142 to 146 (RNGHT), and Glu-166. Glu-31 contributes to the Mg(2+) binding site. Residue His-145 coordinates Mg(2+). The tract at residues 204–401 (HDSLVKQISV…QIKMGHMFNF (198 aa)) is GTP cyclohydrolase II. 254-258 (RIHSE) provides a ligand contact to GTP. Zn(2+) contacts are provided by Cys-259, Cys-270, and Cys-272. Residues Gln-275, 297 to 299 (EGR), and Thr-319 each bind GTP. The active-site Proton acceptor; for GTP cyclohydrolase activity is the Asp-331. The Nucleophile; for GTP cyclohydrolase activity role is filled by Arg-333. Residues Thr-354 and Lys-359 each contribute to the GTP site.

It in the N-terminal section; belongs to the DHBP synthase family. The protein in the C-terminal section; belongs to the GTP cyclohydrolase II family. Mg(2+) serves as cofactor. The cofactor is Mn(2+). Zn(2+) is required as a cofactor.

The enzyme catalyses D-ribulose 5-phosphate = (2S)-2-hydroxy-3-oxobutyl phosphate + formate + H(+). It catalyses the reaction GTP + 4 H2O = 2,5-diamino-6-hydroxy-4-(5-phosphoribosylamino)-pyrimidine + formate + 2 phosphate + 3 H(+). It functions in the pathway cofactor biosynthesis; riboflavin biosynthesis; 2-hydroxy-3-oxobutyl phosphate from D-ribulose 5-phosphate: step 1/1. Its pathway is cofactor biosynthesis; riboflavin biosynthesis; 5-amino-6-(D-ribitylamino)uracil from GTP: step 1/4. Functionally, catalyzes the conversion of D-ribulose 5-phosphate to formate and 3,4-dihydroxy-2-butanone 4-phosphate. Catalyzes the conversion of GTP to 2,5-diamino-6-ribosylamino-4(3H)-pyrimidinone 5'-phosphate (DARP), formate and pyrophosphate. The polypeptide is Riboflavin biosynthesis protein RibBA (Actinobacillus pleuropneumoniae serotype 7 (strain AP76)).